A 318-amino-acid polypeptide reads, in one-letter code: NADH-ubiquinone oxidoreductase chain 1 (318 aa).

8 consecutive transmembrane segments (helical) span residues 3–23, 70–90, 100–120, 146–166, 171–191, 231–251, 254–273, and 294–314; these read FINILTLLIPILIAMAFLTLV, LFIIAPTLSLTLALSLWIPLP, LGMLFILATSSLSVYSILWSG, MAIILLSVLLMSGSFSLQMLI, HIWLLIPAWPMAMMWYISTLA, IILMNALTSIVFLGPLYHINY, LYSTSFMTETLLLSTTFLWI, and LPLTLAFCMWYISLPIFLAGI.

Belongs to the complex I subunit 1 family. In terms of assembly, core subunit of respiratory chain NADH dehydrogenase (Complex I) which is composed of 45 different subunits.

The protein localises to the mitochondrion inner membrane. The catalysed reaction is a ubiquinone + NADH + 5 H(+)(in) = a ubiquinol + NAD(+) + 4 H(+)(out). Core subunit of the mitochondrial membrane respiratory chain NADH dehydrogenase (Complex I) which catalyzes electron transfer from NADH through the respiratory chain, using ubiquinone as an electron acceptor. Essential for the catalytic activity and assembly of complex I. This Rattus norvegicus (Rat) protein is NADH-ubiquinone oxidoreductase chain 1.